The sequence spans 347 residues: Palmitoyltransferase ZDHHC19 (347 aa).

Transmembrane regions (helical) follow at residues 29 to 49 (VFAA…FGFP) and 59 to 79 (WAFP…LVSL). In terms of domain architecture, DHHC spans 112-162 (EWCPKCLFHRPPRTYHCPWCNICVEDFDHHCKWVNNCIGHRNFRLFMLLVL). Cys-142 acts as the S-palmitoyl cysteine intermediate in catalysis. 2 helical membrane passes run 156–176 (LFML…VTCL) and 194–214 (AILV…LLLI). A disordered region spans residues 275–347 (IQEKTKPSPP…PTAEPAAGDP (73 aa)).

It belongs to the DHHC palmitoyltransferase family.

The protein localises to the golgi apparatus membrane. The protein resides in the cytoplasm. It localises to the perinuclear region. It catalyses the reaction L-cysteinyl-[protein] + hexadecanoyl-CoA = S-hexadecanoyl-L-cysteinyl-[protein] + CoA. In terms of biological role, palmitoyltransferase that mediates palmitoylation oproteins, such as RRAS and SQSTM1. Catalyzes palmitoylation of RRAS, leading to increased cell viability. Acts as a positive regulator of autophagy by mediating palmitoylation of SQSTM1, promoting affinity between SQSTM1 and ATG8 proteins and recruitment of ubiquitinated cargo proteins to autophagosomes. This chain is Palmitoyltransferase ZDHHC19 (Zdhhc19), found in Mus musculus (Mouse).